A 166-amino-acid chain; its full sequence is uncharacterized protein (166 aa).

4Fe-4S ferredoxin-type domains follow at residues 3 to 33, 37 to 67, and 68 to 97; these read MKKIIMTNFNCDNCGDCVKACMEKNKVGRIA, KDGKYIPIVCQHCASAPCKEVCPVSAIEHKD, and GYVYLNEDVCIGCGLCALACPFGAILMEDK. 16 residues coordinate [4Fe-4S] cluster: Cys13, Cys16, Cys19, Cys23, Cys46, Cys49, Cys54, Cys58, Cys77, Cys80, Cys83, Cys87, Cys101, Cys104, Cys111, and Cys115.

[4Fe-4S] cluster serves as cofactor.

This is an uncharacterized protein from Methanocaldococcus jannaschii (strain ATCC 43067 / DSM 2661 / JAL-1 / JCM 10045 / NBRC 100440) (Methanococcus jannaschii).